Here is a 222-residue protein sequence, read N- to C-terminus: Probable GTP-binding protein EngB (222 aa).

Residues 25-199 enclose the EngB-type G domain; the sequence is AGVEVAFAGR…SQLLQNWFDT (175 aa). GTP-binding positions include 33-40, 60-64, 78-81, 145-148, and 178-180; these read GRSNAGKS, GRTQH, DLPG, TKAD, and FSS. Mg(2+) is bound by residues serine 40 and threonine 62.

This sequence belongs to the TRAFAC class TrmE-Era-EngA-EngB-Septin-like GTPase superfamily. EngB GTPase family. It depends on Mg(2+) as a cofactor.

Necessary for normal cell division and for the maintenance of normal septation. This Nitrosomonas europaea (strain ATCC 19718 / CIP 103999 / KCTC 2705 / NBRC 14298) protein is Probable GTP-binding protein EngB.